A 488-amino-acid chain; its full sequence is Probable malate:quinone oxidoreductase (488 aa).

This sequence belongs to the MQO family. Requires FAD as cofactor.

It catalyses the reaction (S)-malate + a quinone = a quinol + oxaloacetate. It functions in the pathway carbohydrate metabolism; tricarboxylic acid cycle; oxaloacetate from (S)-malate (quinone route): step 1/1. This Neisseria meningitidis serogroup C / serotype 2a (strain ATCC 700532 / DSM 15464 / FAM18) protein is Probable malate:quinone oxidoreductase.